The following is a 155-amino-acid chain: RNA pyrophosphohydrolase (155 aa).

One can recognise a Nudix hydrolase domain in the interval 5–147; the sequence is RYRPNVAAIV…KRPVYKKVLE (143 aa). A Nudix box motif is present at residues 42–63; that stretch reads GGIDKGESPKEALLRELKEEIG.

The protein belongs to the Nudix hydrolase family. RppH subfamily. A divalent metal cation serves as cofactor.

Functionally, accelerates the degradation of transcripts by removing pyrophosphate from the 5'-end of triphosphorylated RNA, leading to a more labile monophosphorylated state that can stimulate subsequent ribonuclease cleavage. The polypeptide is RNA pyrophosphohydrolase (Nitratiruptor sp. (strain SB155-2)).